The sequence spans 386 residues: Succinate--CoA ligase [ADP-forming] subunit beta (386 aa).

The ATP-grasp domain occupies K9 to R244. ATP-binding positions include K46, G53–G55, E99, C102, and E107. Mg(2+) contacts are provided by N199 and D213. Substrate contacts are provided by residues N264 and G321–M323.

This sequence belongs to the succinate/malate CoA ligase beta subunit family. As to quaternary structure, heterotetramer of two alpha and two beta subunits. The cofactor is Mg(2+).

The enzyme catalyses succinate + ATP + CoA = succinyl-CoA + ADP + phosphate. The catalysed reaction is GTP + succinate + CoA = succinyl-CoA + GDP + phosphate. Its pathway is carbohydrate metabolism; tricarboxylic acid cycle; succinate from succinyl-CoA (ligase route): step 1/1. Succinyl-CoA synthetase functions in the citric acid cycle (TCA), coupling the hydrolysis of succinyl-CoA to the synthesis of either ATP or GTP and thus represents the only step of substrate-level phosphorylation in the TCA. The beta subunit provides nucleotide specificity of the enzyme and binds the substrate succinate, while the binding sites for coenzyme A and phosphate are found in the alpha subunit. This Rickettsia peacockii (strain Rustic) protein is Succinate--CoA ligase [ADP-forming] subunit beta.